A 261-amino-acid chain; its full sequence is Phosphatidylglycerol--prolipoprotein diacylglyceryl transferase (261 aa).

7 helical membrane passes run 19 to 39 (VHWYGLMYLVGFAMAWGLALY), 56 to 76 (LIFYGALGLIIGGRLGYMLFY), 92 to 112 (WRGGMSFHGGLIGVIVTTWIF), 126 to 146 (FVVPLVPLGLAAGRIGNFING), 173 to 193 (QLYEFLLEGALLFIVIWWFSA), 199 to 219 (FAVSSLFLLCYGLFRFTAEFF), and 227 to 247 (GFVAFGWLTRGQELSLPMIII). Arginine 139 serves as a coordination point for a 1,2-diacyl-sn-glycero-3-phospho-(1'-sn-glycerol).

This sequence belongs to the Lgt family.

It is found in the cell inner membrane. The enzyme catalyses L-cysteinyl-[prolipoprotein] + a 1,2-diacyl-sn-glycero-3-phospho-(1'-sn-glycerol) = an S-1,2-diacyl-sn-glyceryl-L-cysteinyl-[prolipoprotein] + sn-glycerol 1-phosphate + H(+). It participates in protein modification; lipoprotein biosynthesis (diacylglyceryl transfer). Its function is as follows. Catalyzes the transfer of the diacylglyceryl group from phosphatidylglycerol to the sulfhydryl group of the N-terminal cysteine of a prolipoprotein, the first step in the formation of mature lipoproteins. In Coxiella burnetii (strain Dugway 5J108-111), this protein is Phosphatidylglycerol--prolipoprotein diacylglyceryl transferase.